The primary structure comprises 82 residues: Envelope small membrane protein (82 aa).

Topologically, residues 1–16 are virion surface; that stretch reads MLPFVHEQIGTIIVNF. Residues 17–37 traverse the membrane as a helical segment; the sequence is FILTVVCAITLVVCLAILTAI. Over 38-78 the chain is Intravirion; sequence RLCVQCASGVNTLLFVPAFYIYNTGRNAYFKFQENRPPFPP.

It belongs to the betacoronaviruses E protein family. In terms of assembly, homopentamer. Interacts with membrane protein M in the budding compartment of the host cell, which is located between endoplasmic reticulum and the Golgi complex. Interacts with Nucleoprotein.

The protein localises to the host Golgi apparatus membrane. Plays a central role in virus morphogenesis and assembly. Acts as a viroporin and self-assembles in host membranes forming pentameric protein-lipid pores that allow ion transport. Also plays a role in the induction of apoptosis. The polypeptide is Envelope small membrane protein (Tylonycteris pachypus (Lesser bamboo bat)).